The primary structure comprises 296 residues: GTPase Era (296 aa).

The 168-residue stretch at 7–174 folds into the Era-type G domain; the sequence is KAGYISIVGR…TEVIRHYLPE (168 aa). The interval 15–22 is G1; the sequence is GRPNVGKS. 15 to 22 contacts GTP; the sequence is GRPNVGKS. Residues 41–45 are G2; the sequence is QTTRH. A G3 region spans residues 62–65; it reads DTPG. GTP-binding positions include 62 to 66 and 123 to 126; these read DTPGF and NKID. Positions 123–126 are G4; sequence NKID. Residues 153–155 form a G5 region; it reads VSA. The region spanning 205-281 is the KH type-2 domain; the sequence is IGEEVPYSVS…YLEIWVKVKS (77 aa).

Belongs to the TRAFAC class TrmE-Era-EngA-EngB-Septin-like GTPase superfamily. Era GTPase family. As to quaternary structure, monomer.

It localises to the cytoplasm. It is found in the cell inner membrane. Functionally, an essential GTPase that binds both GDP and GTP, with rapid nucleotide exchange. Plays a role in 16S rRNA processing and 30S ribosomal subunit biogenesis and possibly also in cell cycle regulation and energy metabolism. In Nitrosomonas eutropha (strain DSM 101675 / C91 / Nm57), this protein is GTPase Era.